A 156-amino-acid polypeptide reads, in one-letter code: 6,7-dimethyl-8-ribityllumazine synthase (156 aa).

5-amino-6-(D-ribitylamino)uracil-binding positions include Phe23, Ser57 to Glu59, and Ala81 to Ile83. Gly86–Thr87 contacts (2S)-2-hydroxy-3-oxobutyl phosphate. His89 serves as the catalytic Proton donor. Phe114 contacts 5-amino-6-(D-ribitylamino)uracil. Residue Arg128 participates in (2S)-2-hydroxy-3-oxobutyl phosphate binding.

This sequence belongs to the DMRL synthase family. Forms an icosahedral capsid composed of 60 subunits, arranged as a dodecamer of pentamers.

The enzyme catalyses (2S)-2-hydroxy-3-oxobutyl phosphate + 5-amino-6-(D-ribitylamino)uracil = 6,7-dimethyl-8-(1-D-ribityl)lumazine + phosphate + 2 H2O + H(+). The protein operates within cofactor biosynthesis; riboflavin biosynthesis; riboflavin from 2-hydroxy-3-oxobutyl phosphate and 5-amino-6-(D-ribitylamino)uracil: step 1/2. Functionally, catalyzes the formation of 6,7-dimethyl-8-ribityllumazine by condensation of 5-amino-6-(D-ribitylamino)uracil with 3,4-dihydroxy-2-butanone 4-phosphate. This is the penultimate step in the biosynthesis of riboflavin. The polypeptide is 6,7-dimethyl-8-ribityllumazine synthase (Alkalilimnicola ehrlichii (strain ATCC BAA-1101 / DSM 17681 / MLHE-1)).